A 158-amino-acid polypeptide reads, in one-letter code: 6,7-dimethyl-8-ribityllumazine synthase (158 aa).

5-amino-6-(D-ribitylamino)uracil is bound by residues Phe23, 57 to 59 (AFE), and 81 to 83 (TVI). 86–87 (GT) provides a ligand contact to (2S)-2-hydroxy-3-oxobutyl phosphate. His89 acts as the Proton donor in catalysis. Phe114 is a 5-amino-6-(D-ribitylamino)uracil binding site. Arg128 provides a ligand contact to (2S)-2-hydroxy-3-oxobutyl phosphate.

This sequence belongs to the DMRL synthase family.

It carries out the reaction (2S)-2-hydroxy-3-oxobutyl phosphate + 5-amino-6-(D-ribitylamino)uracil = 6,7-dimethyl-8-(1-D-ribityl)lumazine + phosphate + 2 H2O + H(+). It functions in the pathway cofactor biosynthesis; riboflavin biosynthesis; riboflavin from 2-hydroxy-3-oxobutyl phosphate and 5-amino-6-(D-ribitylamino)uracil: step 1/2. Its function is as follows. Catalyzes the formation of 6,7-dimethyl-8-ribityllumazine by condensation of 5-amino-6-(D-ribitylamino)uracil with 3,4-dihydroxy-2-butanone 4-phosphate. This is the penultimate step in the biosynthesis of riboflavin. This is 6,7-dimethyl-8-ribityllumazine synthase from Desulforudis audaxviator (strain MP104C).